The following is a 405-amino-acid chain: L-rhamnonate dehydratase (405 aa).

2 residues coordinate substrate: histidine 33 and arginine 59. Residues aspartate 226, glutamate 252, and glutamate 280 each coordinate Mg(2+). The active-site Proton acceptor is histidine 329. A substrate-binding site is contributed by glutamate 349.

It belongs to the mandelate racemase/muconate lactonizing enzyme family. RhamD subfamily. Homooctamer; tetramer of dimers. The cofactor is Mg(2+).

It catalyses the reaction L-rhamnonate = 2-dehydro-3-deoxy-L-rhamnonate + H2O. In terms of biological role, catalyzes the dehydration of L-rhamnonate to 2-keto-3-deoxy-L-rhamnonate (KDR). The chain is L-rhamnonate dehydratase from Escherichia coli O81 (strain ED1a).